Reading from the N-terminus, the 36-residue chain is Photosystem I reaction center subunit VIII (36 aa).

Residues S8–L28 traverse the membrane as a helical segment.

Belongs to the PsaI family.

It is found in the plastid. The protein localises to the chloroplast thylakoid membrane. In terms of biological role, may help in the organization of the PsaL subunit. The protein is Photosystem I reaction center subunit VIII of Brassica oleracea (Wild cabbage).